A 261-amino-acid chain; its full sequence is MTVVTMKQLLEAGVHFGHQTRRWDPKMAPYIFTQRNGIYIIDLQKTIRMLDDAYNYVKAVAQDGGVFLFVGTKKQAQDAVKEEATRAGQYYVNQRWLGGTLTNWTTIQSRVKRLKQLKEMSEDGTFDVLPKKEVALLTKEMEKLERFLGGIEDMPRIPDVMFVVDPKKEKIAVHEANILGIPVVAMVDTNTDPDPIDVVIPANDDAIRAIRLISGAMADAIIEGKQGQDDSEDVEKEMADKAAAENDDEESIEEVVEKSED.

The segment at 224-261 is disordered; it reads GKQGQDDSEDVEKEMADKAAAENDDEESIEEVVEKSED. Residues 245 to 254 show a composition bias toward acidic residues; the sequence is ENDDEESIEE.

It belongs to the universal ribosomal protein uS2 family.

The protein is Small ribosomal subunit protein uS2 of Lactobacillus gasseri (strain ATCC 33323 / DSM 20243 / BCRC 14619 / CIP 102991 / JCM 1131 / KCTC 3163 / NCIMB 11718 / NCTC 13722 / AM63).